The primary structure comprises 81 residues: Sulfur carrier protein TusA (81 aa).

The active-site Cysteine persulfide intermediate is C19.

It belongs to the sulfur carrier protein TusA family.

The protein localises to the cytoplasm. Sulfur carrier protein which probably makes part of a sulfur-relay system. The sequence is that of Sulfur carrier protein TusA from Shewanella baltica (strain OS185).